A 551-amino-acid polypeptide reads, in one-letter code: Oleuropein beta-glucosidase (551 aa).

A compositionally biased stretch (polar residues) spans 1–27 (MDIQSNVLTITSGSTPTDTSSNGQAAK). Positions 1–33 (MDIQSNVLTITSGSTPTDTSSNGQAAKSTKERI) are disordered. Residues Q52, H156, 201 to 202 (NE), Y363, E433, W482, 489 to 490 (EW), and F498 each bind a beta-D-glucoside. E202 functions as the Proton donor in the catalytic mechanism. E433 serves as the catalytic Nucleophile. The required for the homomultimerization stretch occupies residues 502-551 (YVDYANGRYTRLPKRSAVWWRNFLTKPTAVPLKNEPEKSEDRRKRLRGST). The disordered stretch occupies residues 532–551 (PLKNEPEKSEDRRKRLRGST). The segment covering 535 to 544 (NEPEKSEDRR) has biased composition (basic and acidic residues). A Nuclear localization signal motif is present at residues 542-550 (DRRKRLRGS).

This sequence belongs to the glycosyl hydrolase 1 family. As to quaternary structure, homomultimer. Native form of the enzyme requires at least an octamer conformation. Expressed in expanding leaves and in young drupes, mostly in the developing seed coat tissues, the perisperm and the mesocarp. Also detected in shoot and root meristems, flower buds, developing ovaries and tapetal cells of the anther. Not detected in embryos or endosperm, or in leaf trichomes.

It is found in the nucleus. It catalyses the reaction oleuropein + H2O = oleuropein aglycone + D-glucose. Its function is as follows. Major beta-glucosidase activating oleuropein into a potent protein cross-linking agent. No activity with rutin, luteolin or p-nitrophenyl-beta-glucopyranoside as substrates. The sequence is that of Oleuropein beta-glucosidase from Olea europaea (Common olive).